The sequence spans 144 residues: Kunitz-type elastase inhibitor BrEI (144 aa).

An N-linked (GlcNAc...) asparagine glycan is attached at Asn-38. Cysteines 41 and 88 form a disulfide.

This sequence belongs to the leguminous Kunitz-type inhibitor family.

Inhibitor of porcine pancreatic elastase with a Ki of 27 nM. Does not inhibit human neutrophil elastase, bovine trypsin, human plasma kallikrein or porcine pancreatic kallikrein. This is Kunitz-type elastase inhibitor BrEI from Bauhinia rufa (Orchid tree).